A 425-amino-acid polypeptide reads, in one-letter code: Histidine--tRNA ligase 1 (425 aa).

It belongs to the class-II aminoacyl-tRNA synthetase family. As to quaternary structure, homodimer.

It localises to the cytoplasm. It carries out the reaction tRNA(His) + L-histidine + ATP = L-histidyl-tRNA(His) + AMP + diphosphate + H(+). This is Histidine--tRNA ligase 1 from Bacillus thuringiensis subsp. konkukian (strain 97-27).